Consider the following 450-residue polypeptide: Glycerol dehydrogenase 1 (450 aa).

NAD(+) is bound by residues Asp-99, 155–159 (GKTMD), and 177–180 (TTAS). A substrate-binding site is contributed by Asp-182. The NAD(+) site is built by Ser-186, Leu-188, and Tyr-192. Asp-232, His-315, and His-333 together coordinate substrate. Positions 232, 315, and 333 each coordinate Zn(2+).

The protein belongs to the iron-containing alcohol dehydrogenase family. It depends on Zn(2+) as a cofactor.

It localises to the mitochondrion. The catalysed reaction is glycerol + NAD(+) = dihydroxyacetone + NADH + H(+). The protein operates within polyol metabolism; glycerol fermentation; glycerone phosphate from glycerol (oxidative route): step 1/2. In terms of biological role, glycerol dehydrogenase involved in the assimilation of glycerol. This chain is Glycerol dehydrogenase 1 (gld1), found in Schizosaccharomyces pombe (strain 972 / ATCC 24843) (Fission yeast).